The sequence spans 206 residues: Small ribosomal subunit protein uS4 (206 aa).

The 61-residue stretch at 96 to 156 folds into the S4 RNA-binding domain; sequence GRLDNVVYRM…EKAKKQSRVK (61 aa).

This sequence belongs to the universal ribosomal protein uS4 family. As to quaternary structure, part of the 30S ribosomal subunit. Contacts protein S5. The interaction surface between S4 and S5 is involved in control of translational fidelity.

One of the primary rRNA binding proteins, it binds directly to 16S rRNA where it nucleates assembly of the body of the 30S subunit. Its function is as follows. With S5 and S12 plays an important role in translational accuracy. The protein is Small ribosomal subunit protein uS4 of Yersinia enterocolitica serotype O:8 / biotype 1B (strain NCTC 13174 / 8081).